A 296-amino-acid chain; its full sequence is Lipoyl synthase (296 aa).

The [4Fe-4S] cluster site is built by Cys37, Cys42, Cys48, Cys63, Cys67, Cys70, and Ser276. A Radical SAM core domain is found at 49 to 265 (WSKKHTTVMI…ERVAKTKGFL (217 aa)).

The protein belongs to the radical SAM superfamily. Lipoyl synthase family. It depends on [4Fe-4S] cluster as a cofactor.

Its subcellular location is the cytoplasm. The catalysed reaction is [[Fe-S] cluster scaffold protein carrying a second [4Fe-4S](2+) cluster] + N(6)-octanoyl-L-lysyl-[protein] + 2 oxidized [2Fe-2S]-[ferredoxin] + 2 S-adenosyl-L-methionine + 4 H(+) = [[Fe-S] cluster scaffold protein] + N(6)-[(R)-dihydrolipoyl]-L-lysyl-[protein] + 4 Fe(3+) + 2 hydrogen sulfide + 2 5'-deoxyadenosine + 2 L-methionine + 2 reduced [2Fe-2S]-[ferredoxin]. The protein operates within protein modification; protein lipoylation via endogenous pathway; protein N(6)-(lipoyl)lysine from octanoyl-[acyl-carrier-protein]: step 2/2. Functionally, catalyzes the radical-mediated insertion of two sulfur atoms into the C-6 and C-8 positions of the octanoyl moiety bound to the lipoyl domains of lipoate-dependent enzymes, thereby converting the octanoylated domains into lipoylated derivatives. The chain is Lipoyl synthase from Rickettsia massiliae (strain Mtu5).